A 534-amino-acid polypeptide reads, in one-letter code: High-affinity nicotinic acid transporter (534 aa).

Residues 1 to 130 are Extracellular-facing; it reads MSNKFTMESP…DIHLVGTQYN (130 aa). A disordered region spans residues 21-56; the sequence is SPTNDGSEEKPTEVTFQEDEGHDASLHNRSHDKKSE. The residue at position 27 (Ser27) is a Phosphoserine. The chain crosses the membrane as a helical span at residues 131-151; sequence TCVTVFFATYVLFDPIGTNLL. Lys152 is a topological domain (cytoplasmic). A helical membrane pass occupies residues 153-173; that stretch reads IMGPPLMMSICLTCFGAISLG. Over 174–187 the chain is Extracellular; the sequence is TAWVKNYAQLIVVR. The chain crosses the membrane as a helical span at residues 188 to 208; the sequence is LLLGAFEGMIYPAINMYLSVC. The Cytoplasmic segment spans residues 209 to 217; that stretch reads YRREQYALR. The helical transmembrane segment at 218 to 238 threads the bilayer; that stretch reads FAFVFSAACLSSSFGGLIAYG. The Extracellular portion of the chain corresponds to 239 to 250; the sequence is CSKISGSLKDWQ. Residues 251–271 form a helical membrane-spanning segment; that stretch reads YIYIVEGCISLGFVPFYAFGL. At 272–323 the chain is on the cytoplasmic side; it reads SKNLEDSWFFNKEEKEYISERYKTMNTFDPDEKFEWFQVWQAVKDVKTWASA. Residue Lys283 forms a Glycyl lysine isopeptide (Lys-Gly) (interchain with G-Cter in ubiquitin) linkage. Residues 324–344 traverse the membrane as a helical segment; sequence VALFGIDLTTFGLTVFLPIII. Residues 345-355 lie on the Extracellular side of the membrane; it reads TSMGFTNVRAQ. Residues 356–376 form a helical membrane-spanning segment; that stretch reads LMTVPIYFLTAIVFFICAVWS. Residues 377–384 lie on the Cytoplasmic side of the membrane; that stretch reads DRIKLRSP. A helical membrane pass occupies residues 385 to 405; it reads FILGACLTTSIGIAIVLGSQV. Topologically, residues 406 to 410 are extracellular; the sequence is HGVRY. Residues 411–431 form a helical membrane-spanning segment; sequence FGVYILCMGIYVNAACNCLWL. The Cytoplasmic segment spans residues 432 to 444; that stretch reads SGNTGNYFKRATA. The helical transmembrane segment at 445-465 threads the bilayer; it reads LGINLFFGSGSGLVSGQIFVA. At 466-474 the chain is on the extracellular side; sequence KDKPRYIKG. The helical transmembrane segment at 475-495 threads the bilayer; that stretch reads LSISLAFQVFSIFMTVVQIFL. Residues 496-534 are Cytoplasmic-facing; that stretch reads YKRENDKKKAIIDRCNELGEPIPYDERLSDKNPEFKYMY.

It belongs to the major facilitator superfamily. Allantoate permease family.

The protein localises to the membrane. In terms of biological role, involved in the uptake of nicotinic acid. This Saccharomyces cerevisiae (strain ATCC 204508 / S288c) (Baker's yeast) protein is High-affinity nicotinic acid transporter (TNA1).